Here is a 462-residue protein sequence, read N- to C-terminus: Chromosomal replication initiator protein DnaA (462 aa).

The interval M1–A84 is domain I, interacts with DnaA modulators. A domain II region spans residues A84–S125. The interval N126 to A342 is domain III, AAA+ region. 4 residues coordinate ATP: G170, G172, K173, and T174. The segment at N343–S462 is domain IV, binds dsDNA.

The protein belongs to the DnaA family. As to quaternary structure, oligomerizes as a right-handed, spiral filament on DNA at oriC.

The protein localises to the cytoplasm. Its function is as follows. Plays an essential role in the initiation and regulation of chromosomal replication. ATP-DnaA binds to the origin of replication (oriC) to initiate formation of the DNA replication initiation complex once per cell cycle. Binds the DnaA box (a 9 base pair repeat at the origin) and separates the double-stranded (ds)DNA. Forms a right-handed helical filament on oriC DNA; dsDNA binds to the exterior of the filament while single-stranded (ss)DNA is stabiized in the filament's interior. The ATP-DnaA-oriC complex binds and stabilizes one strand of the AT-rich DNA unwinding element (DUE), permitting loading of DNA polymerase. After initiation quickly degrades to an ADP-DnaA complex that is not apt for DNA replication. Binds acidic phospholipids. The polypeptide is Chromosomal replication initiator protein DnaA (Shewanella baltica (strain OS195)).